A 205-amino-acid chain; its full sequence is 7-methyl-GTP pyrophosphatase (205 aa).

The active-site Proton acceptor is Asp-79.

It belongs to the Maf family. YceF subfamily. Requires a divalent metal cation as cofactor.

It is found in the cytoplasm. The enzyme catalyses N(7)-methyl-GTP + H2O = N(7)-methyl-GMP + diphosphate + H(+). Its function is as follows. Nucleoside triphosphate pyrophosphatase that hydrolyzes 7-methyl-GTP (m(7)GTP). May have a dual role in cell division arrest and in preventing the incorporation of modified nucleotides into cellular nucleic acids. This Paraburkholderia xenovorans (strain LB400) protein is 7-methyl-GTP pyrophosphatase.